The following is a 554-amino-acid chain: Phenylalanine--tRNA ligase beta subunit (554 aa).

One can recognise a B5 domain in the interval Leu276–Gly351. Mg(2+)-binding residues include Asp329, Asp335, Glu338, and Glu339.

This sequence belongs to the phenylalanyl-tRNA synthetase beta subunit family. Type 2 subfamily. As to quaternary structure, tetramer of two alpha and two beta subunits. It depends on Mg(2+) as a cofactor.

Its subcellular location is the cytoplasm. The catalysed reaction is tRNA(Phe) + L-phenylalanine + ATP = L-phenylalanyl-tRNA(Phe) + AMP + diphosphate + H(+). This Methanococcus maripaludis (strain C7 / ATCC BAA-1331) protein is Phenylalanine--tRNA ligase beta subunit.